The chain runs to 532 residues: CTP synthase (532 aa).

Residues 1-267 are amidoligase domain; it reads MTKYIFVTGG…DDIVLEHLQL (267 aa). Serine 13 contacts CTP. Residue serine 13 participates in UTP binding. 14–19 provides a ligand contact to ATP; it reads SIGKGI. Tyrosine 54 provides a ligand contact to L-glutamine. Aspartate 71 provides a ligand contact to ATP. Residues aspartate 71 and glutamate 141 each coordinate Mg(2+). CTP is bound by residues 148 to 150, 188 to 193, and lysine 224; these read DIE and KTKPTQ. Residues 188-193 and lysine 224 each bind UTP; that span reads KTKPTQ. One can recognise a Glutamine amidotransferase type-1 domain in the interval 292-532; that stretch reads RIGLVGKYVS…DFVGAALNNK (241 aa). Glycine 354 is an L-glutamine binding site. Cysteine 381 functions as the Nucleophile; for glutamine hydrolysis in the catalytic mechanism. Residues 382 to 385, glutamate 405, and arginine 462 each bind L-glutamine; that span reads LGMQ. Residues histidine 507 and glutamate 509 contribute to the active site.

The protein belongs to the CTP synthase family. Homotetramer.

The enzyme catalyses UTP + L-glutamine + ATP + H2O = CTP + L-glutamate + ADP + phosphate + 2 H(+). The catalysed reaction is L-glutamine + H2O = L-glutamate + NH4(+). It catalyses the reaction UTP + NH4(+) + ATP = CTP + ADP + phosphate + 2 H(+). It functions in the pathway pyrimidine metabolism; CTP biosynthesis via de novo pathway; CTP from UDP: step 2/2. Allosterically activated by GTP, when glutamine is the substrate; GTP has no effect on the reaction when ammonia is the substrate. The allosteric effector GTP functions by stabilizing the protein conformation that binds the tetrahedral intermediate(s) formed during glutamine hydrolysis. Inhibited by the product CTP, via allosteric rather than competitive inhibition. Catalyzes the ATP-dependent amination of UTP to CTP with either L-glutamine or ammonia as the source of nitrogen. Regulates intracellular CTP levels through interactions with the four ribonucleotide triphosphates. In Listeria monocytogenes serotype 4b (strain F2365), this protein is CTP synthase.